Reading from the N-terminus, the 298-residue chain is ATP synthase gamma chain (298 aa).

It belongs to the ATPase gamma chain family. F-type ATPases have 2 components, CF(1) - the catalytic core - and CF(0) - the membrane proton channel. CF(1) has five subunits: alpha(3), beta(3), gamma(1), delta(1), epsilon(1). CF(0) has three main subunits: a, b and c.

It is found in the cell inner membrane. Produces ATP from ADP in the presence of a proton gradient across the membrane. The gamma chain is believed to be important in regulating ATPase activity and the flow of protons through the CF(0) complex. The protein is ATP synthase gamma chain of Desulforapulum autotrophicum (strain ATCC 43914 / DSM 3382 / VKM B-1955 / HRM2) (Desulfobacterium autotrophicum).